The chain runs to 291 residues: ATP synthase gamma chain (291 aa).

Belongs to the ATPase gamma chain family. In terms of assembly, F-type ATPases have 2 components, CF(1) - the catalytic core - and CF(0) - the membrane proton channel. CF(1) has five subunits: alpha(3), beta(3), gamma(1), delta(1), epsilon(1). CF(0) has three main subunits: a, b and c.

The protein resides in the cell membrane. Functionally, produces ATP from ADP in the presence of a proton gradient across the membrane. The gamma chain is believed to be important in regulating ATPase activity and the flow of protons through the CF(0) complex. In Buchnera aphidicola subsp. Schizaphis graminum (strain Sg), this protein is ATP synthase gamma chain.